Here is a 122-residue protein sequence, read N- to C-terminus: UPF0102 protein DIP1513 (122 aa).

Belongs to the UPF0102 family.

The protein is UPF0102 protein DIP1513 of Corynebacterium diphtheriae (strain ATCC 700971 / NCTC 13129 / Biotype gravis).